The chain runs to 217 residues: Protein matrimony (217 aa).

Residues 39–41 (STP) carry the POLO box domain (PBD)-binding motif. Phosphoserine is present on residues Ser-63 and Ser-66. The disordered stretch occupies residues 83–106 (KQQQQQQHQHCHRTQLKPPPFVLP). The SAM domain occupies 157-217 (NHAANVEQIL…NRIMDVLHTL (61 aa)).

As to quaternary structure, interacts with polo. Interacts with cort. In terms of processing, probably ubiquitinated: degraded during the oocyte-to-embryo transition by the anaphase promoting complex/cyclosome (APC/C) containing cort protein.

It localises to the nucleus. The protein resides in the chromosome. Functionally, polo kinase inhibitor required to maintain G2 arrest in the meiotic cell cycle in females. Holds heterochromatically paired homologs together from the end of pachytene until metaphase I. Haploinsufficient locus for homologous achiasmate segregation and may be required for the maintenance of heterochromatic pairings. This Drosophila melanogaster (Fruit fly) protein is Protein matrimony.